We begin with the raw amino-acid sequence, 55 residues long: Rubredoxin-1 (55 aa).

A Rubredoxin-like domain is found at M1 to I54. Fe cation is bound by residues C6, C9, C39, and C42.

This sequence belongs to the rubredoxin family. Requires Fe(3+) as cofactor.

It localises to the cytoplasm. It functions in the pathway hydrocarbon metabolism; alkane degradation. Involved in the hydrocarbon hydroxylating system, which transfers electrons from NADH to rubredoxin reductase and then through rubredoxin to alkane 1 monooxygenase. This is Rubredoxin-1 (rubA1) from Pseudomonas aeruginosa (strain ATCC 15692 / DSM 22644 / CIP 104116 / JCM 14847 / LMG 12228 / 1C / PRS 101 / PAO1).